The primary structure comprises 278 residues: Protein mtd-1 (278 aa).

Positions 1–17 (MRSSLLLLVFFLSIGWA) are cleaved as a signal peptide. The Extracellular portion of the chain corresponds to 18–254 (RYCVHNEKSW…EMLEEIEARK (237 aa)). 4 N-linked (GlcNAc...) asparagine glycosylation sites follow: Asn40, Asn73, Asn163, and Asn190. The chain crosses the membrane as a helical span at residues 255-271 (VPVDSSAPVNIILSIAF). Over 272–278 (SIFLIHF) the chain is Cytoplasmic.

Its subcellular location is the cell membrane. Plays a role in mechanosensory transduction (touch sensitivity). The chain is Protein mtd-1 from Caenorhabditis elegans.